Reading from the N-terminus, the 402-residue chain is uncharacterized protein (402 aa).

A run of 12 helical transmembrane segments spans residues 11-31 (LALA…IDMY), 48-68 (LVQL…LIVG), 80-100 (LLIC…SPNI), 108-125 (FLQG…RAIV), 140-160 (LLMV…GAIL), 167-187 (WHTI…LIAL), 219-239 (FMGY…YVSG), 254-274 (VFSI…FIIG), 286-306 (LRIA…MTMI), 308-328 (GPLA…GMVL), 347-367 (SALL…LVGI), and 373-393 (VPMG…FFGL).

The protein belongs to the major facilitator superfamily. Bcr/CmlA family.

The protein resides in the cell membrane. This is an uncharacterized protein from Bacillus subtilis (strain 168).